A 1184-amino-acid chain; its full sequence is DNA-directed RNA polymerase subunit beta' (1184 aa).

The Zn(2+) site is built by Cys-60, Cys-62, Cys-75, and Cys-78. 3 residues coordinate Mg(2+): Asp-449, Asp-451, and Asp-453. Zn(2+)-binding residues include Cys-794, Cys-867, Cys-874, and Cys-877. Positions 1165-1184 (NDQQERQDKEKEETEVKASN) are disordered.

The protein belongs to the RNA polymerase beta' chain family. In terms of assembly, the RNAP catalytic core consists of 2 alpha, 1 beta, 1 beta' and 1 omega subunit. When a sigma factor is associated with the core the holoenzyme is formed, which can initiate transcription. Mg(2+) serves as cofactor. The cofactor is Zn(2+).

The catalysed reaction is RNA(n) + a ribonucleoside 5'-triphosphate = RNA(n+1) + diphosphate. Its function is as follows. DNA-dependent RNA polymerase catalyzes the transcription of DNA into RNA using the four ribonucleoside triphosphates as substrates. In Thermoanaerobacter pseudethanolicus (strain ATCC 33223 / 39E) (Clostridium thermohydrosulfuricum), this protein is DNA-directed RNA polymerase subunit beta'.